A 283-amino-acid chain; its full sequence is Bifunctional protein FolD (283 aa).

Residues glycine 164 to serine 166, serine 189, and threonine 230 each bind NADP(+).

This sequence belongs to the tetrahydrofolate dehydrogenase/cyclohydrolase family. In terms of assembly, homodimer.

The enzyme catalyses (6R)-5,10-methylene-5,6,7,8-tetrahydrofolate + NADP(+) = (6R)-5,10-methenyltetrahydrofolate + NADPH. It carries out the reaction (6R)-5,10-methenyltetrahydrofolate + H2O = (6R)-10-formyltetrahydrofolate + H(+). Its pathway is one-carbon metabolism; tetrahydrofolate interconversion. Functionally, catalyzes the oxidation of 5,10-methylenetetrahydrofolate to 5,10-methenyltetrahydrofolate and then the hydrolysis of 5,10-methenyltetrahydrofolate to 10-formyltetrahydrofolate. This Dictyoglomus thermophilum (strain ATCC 35947 / DSM 3960 / H-6-12) protein is Bifunctional protein FolD.